We begin with the raw amino-acid sequence, 292 residues long: ATP synthase gamma chain (292 aa).

Belongs to the ATPase gamma chain family. F-type ATPases have 2 components, CF(1) - the catalytic core - and CF(0) - the membrane proton channel. CF(1) has five subunits: alpha(3), beta(3), gamma(1), delta(1), epsilon(1). CF(0) has three main subunits: a, b and c.

Its subcellular location is the cell inner membrane. Functionally, produces ATP from ADP in the presence of a proton gradient across the membrane. The gamma chain is believed to be important in regulating ATPase activity and the flow of protons through the CF(0) complex. This chain is ATP synthase gamma chain, found in Brucella anthropi (strain ATCC 49188 / DSM 6882 / CCUG 24695 / JCM 21032 / LMG 3331 / NBRC 15819 / NCTC 12168 / Alc 37) (Ochrobactrum anthropi).